The primary structure comprises 380 residues: Serpin B7 (380 aa).

Phosphoserine is present on S217.

Belongs to the serpin family. Ov-serpin subfamily.

It localises to the cytoplasm. In terms of biological role, might function as an inhibitor of Lys-specific proteases. Might influence the maturation of megakaryocytes via its action as a serpin. The sequence is that of Serpin B7 (Serpinb7) from Mus musculus (Mouse).